A 333-amino-acid polypeptide reads, in one-letter code: Ketol-acid reductoisomerase (NADP(+)) (333 aa).

In terms of domain architecture, KARI N-terminal Rossmann spans 1–179 (MFYDDDADLS…GGTRAGVIKT (179 aa)). NADP(+) is bound by residues 22–25 (YGSQ), Lys-45, Ser-48, Ser-50, and 80–83 (DTAQ). His-105 is a catalytic residue. Gly-131 is an NADP(+) binding site. The KARI C-terminal knotted domain occupies 180 to 325 (TFKDETETDL…KKLRDLMSWV (146 aa)). Positions 188, 192, 224, and 228 each coordinate Mg(2+). Residue Ser-249 participates in substrate binding.

Belongs to the ketol-acid reductoisomerase family. Requires Mg(2+) as cofactor.

The catalysed reaction is (2R)-2,3-dihydroxy-3-methylbutanoate + NADP(+) = (2S)-2-acetolactate + NADPH + H(+). It catalyses the reaction (2R,3R)-2,3-dihydroxy-3-methylpentanoate + NADP(+) = (S)-2-ethyl-2-hydroxy-3-oxobutanoate + NADPH + H(+). It participates in amino-acid biosynthesis; L-isoleucine biosynthesis; L-isoleucine from 2-oxobutanoate: step 2/4. It functions in the pathway amino-acid biosynthesis; L-valine biosynthesis; L-valine from pyruvate: step 2/4. Involved in the biosynthesis of branched-chain amino acids (BCAA). Catalyzes an alkyl-migration followed by a ketol-acid reduction of (S)-2-acetolactate (S2AL) to yield (R)-2,3-dihydroxy-isovalerate. In the isomerase reaction, S2AL is rearranged via a Mg-dependent methyl migration to produce 3-hydroxy-3-methyl-2-ketobutyrate (HMKB). In the reductase reaction, this 2-ketoacid undergoes a metal-dependent reduction by NADPH to yield (R)-2,3-dihydroxy-isovalerate. The polypeptide is Ketol-acid reductoisomerase (NADP(+)) (Mycobacterium bovis (strain ATCC BAA-935 / AF2122/97)).